A 179-amino-acid polypeptide reads, in one-letter code: Large ribosomal subunit protein uL5 (179 aa).

This sequence belongs to the universal ribosomal protein uL5 family. As to quaternary structure, part of the 50S ribosomal subunit; part of the 5S rRNA/L5/L18/L25 subcomplex. Contacts the 5S rRNA and the P site tRNA. Forms a bridge to the 30S subunit in the 70S ribosome.

This is one of the proteins that bind and probably mediate the attachment of the 5S RNA into the large ribosomal subunit, where it forms part of the central protuberance. In the 70S ribosome it contacts protein S13 of the 30S subunit (bridge B1b), connecting the 2 subunits; this bridge is implicated in subunit movement. Contacts the P site tRNA; the 5S rRNA and some of its associated proteins might help stabilize positioning of ribosome-bound tRNAs. In Janthinobacterium sp. (strain Marseille) (Minibacterium massiliensis), this protein is Large ribosomal subunit protein uL5.